Reading from the N-terminus, the 166-residue chain is EEF1A lysine methyltransferase 1 (166 aa).

This sequence belongs to the class I-like SAM-binding methyltransferase superfamily. EFM5 family.

The protein localises to the cytoplasm. It catalyses the reaction L-lysyl-[protein] + 3 S-adenosyl-L-methionine = N(6),N(6),N(6)-trimethyl-L-lysyl-[protein] + 3 S-adenosyl-L-homocysteine + 3 H(+). In terms of biological role, protein-lysine methyltransferase that selectively catalyzes the trimethylation of EEF1A at 'Lys-79'. This chain is EEF1A lysine methyltransferase 1, found in Danio rerio (Zebrafish).